A 317-amino-acid polypeptide reads, in one-letter code: Lipoyl synthase (317 aa).

The interval 1 to 21 (MVTVIDTLARPRHPEKANRPE) is disordered. Residues 12-21 (RHPEKANRPE) show a composition bias toward basic and acidic residues. Residues Cys-57, Cys-62, Cys-68, Cys-83, Cys-87, Cys-90, and Ser-296 each coordinate [4Fe-4S] cluster. In terms of domain architecture, Radical SAM core spans 69-285 (WEKKHATFMI…ETVAYAKGFL (217 aa)).

Belongs to the radical SAM superfamily. Lipoyl synthase family. The cofactor is [4Fe-4S] cluster.

The protein resides in the cytoplasm. The enzyme catalyses [[Fe-S] cluster scaffold protein carrying a second [4Fe-4S](2+) cluster] + N(6)-octanoyl-L-lysyl-[protein] + 2 oxidized [2Fe-2S]-[ferredoxin] + 2 S-adenosyl-L-methionine + 4 H(+) = [[Fe-S] cluster scaffold protein] + N(6)-[(R)-dihydrolipoyl]-L-lysyl-[protein] + 4 Fe(3+) + 2 hydrogen sulfide + 2 5'-deoxyadenosine + 2 L-methionine + 2 reduced [2Fe-2S]-[ferredoxin]. It participates in protein modification; protein lipoylation via endogenous pathway; protein N(6)-(lipoyl)lysine from octanoyl-[acyl-carrier-protein]: step 2/2. Catalyzes the radical-mediated insertion of two sulfur atoms into the C-6 and C-8 positions of the octanoyl moiety bound to the lipoyl domains of lipoate-dependent enzymes, thereby converting the octanoylated domains into lipoylated derivatives. The protein is Lipoyl synthase of Xanthobacter autotrophicus (strain ATCC BAA-1158 / Py2).